The sequence spans 657 residues: Probable cytochrome P450 556A1 (657 aa).

The chain crosses the membrane as a helical span at residues 2-24 (FLTSILYTIIIILIFYKGLEYLI). The disordered stretch occupies residues 440–486 (RSLPSINNNNNNNNNNNNNNNNNNNNNNNNNSNNNSINGNNKNNNRN). Positions 446–486 (NNNNNNNNNNNNNNNNNNNNNNNNNSNNNSINGNNKNNNRN) are enriched in low complexity. Cysteine 587 contacts heme.

Belongs to the cytochrome P450 family. The cofactor is heme.

Its subcellular location is the membrane. The polypeptide is Probable cytochrome P450 556A1 (cyp556A1) (Dictyostelium discoideum (Social amoeba)).